We begin with the raw amino-acid sequence, 97 residues long: YcgL domain-containing protein APP7_0754 (97 aa).

Residues 6–90 (NLCAIYKSPK…PPENLLKTFL (85 aa)) form the YcgL domain.

The chain is YcgL domain-containing protein APP7_0754 from Actinobacillus pleuropneumoniae serotype 7 (strain AP76).